The following is a 361-amino-acid chain: MASPAVPANVPPATAAAAPAPVVTAAPASAPTPSTPAPTPAATPAASPAPVSSDPAVAAPAAPGQTPASAPAPAQTPAPSQPGPALPGPFPGGRVVRLHPVILASIVDSYERRNEGAARVIGTLLGTVDKHSVEVTNCFSVPHNESEDEVAVDMEFAKNMYELHKKVSPNELILGWYATGHDITEHSVLIHEYYSREAPNPIHLTVDTGLQHGRMSIKAYVSTLMGVPGRTMGVMFTPLTVKYAYYDTERIGVDLIMKTCFSPNRVIGLSSDLQQVGGASARIQDALSTVLQYAEDVLSGKVSADNTVGRFLMSLVNQVPKIVPDDFETMLNSNINDLLMVTYLANLTQSQIALNEKLVNL.

Low complexity-rich tracts occupy residues 1–32 (MASPAVPANVPPATAAAAPAPVVTAAPASAPT) and 42–73 (ATPAASPAPVSSDPAVAAPAAPGQTPASAPAP). The interval 1–91 (MASPAVPANV…PGPALPGPFP (91 aa)) is disordered. Position 2 is an N-acetylalanine (Ala-2). At Ser-52 the chain carries Phosphoserine; by CDK11; in vitro. Residues 74 to 90 (AQTPAPSQPGPALPGPF) show a composition bias toward pro residues. Residues 96–226 (VRLHPVILAS…IKAYVSTLMG (131 aa)) enclose the MPN domain. The residue at position 242 (Lys-242) is an N6-acetyllysine. Ser-262 carries the post-translational modification Phosphoserine.

This sequence belongs to the eIF-3 subunit F family. Component of the eukaryotic translation initiation factor 3 (eIF-3) complex, which is composed of 13 subunits: EIF3A, EIF3B, EIF3C, EIF3D, EIF3E, EIF3F, EIF3G, EIF3H, EIF3I, EIF3J, EIF3K, EIF3L and EIF3M. The eIF-3 complex appears to include 3 stable modules: module A is composed of EIF3A, EIF3B, EIF3G and EIF3I; module B is composed of EIF3F, EIF3H, and EIF3M; and module C is composed of EIF3C, EIF3D, EIF3E, EIF3K and EIF3L. EIF3C of module C binds EIF3B of module A and EIF3H of module B, thereby linking the three modules. EIF3J is a labile subunit that binds to the eIF-3 complex via EIF3B. The eIF-3 complex may interact with RPS6KB1 under conditions of nutrient depletion. Mitogenic stimulation may lead to binding and activation of a complex composed of MTOR and RPTOR, leading to phosphorylation and release of RPS6KB1 and binding of EIF4B to eIF-3. Interacts with RNF139; the interaction leads to protein translation inhibitions in a ubiquitination-dependent manner. Interacts with DTX1, the interaction is required for deubiquitinating activity towards NOTCH1. Phosphorylation is enhanced upon serum stimulation. Phosphorylated during apoptosis by caspase-processed CDK11.

The protein localises to the cytoplasm. The catalysed reaction is Thiol-dependent hydrolysis of ester, thioester, amide, peptide and isopeptide bonds formed by the C-terminal Gly of ubiquitin (a 76-residue protein attached to proteins as an intracellular targeting signal).. Functionally, component of the eukaryotic translation initiation factor 3 (eIF-3) complex, which is required for several steps in the initiation of protein synthesis. The eIF-3 complex associates with the 40S ribosome and facilitates the recruitment of eIF-1, eIF-1A, eIF-2:GTP:methionyl-tRNAi and eIF-5 to form the 43S pre-initiation complex (43S PIC). The eIF-3 complex stimulates mRNA recruitment to the 43S PIC and scanning of the mRNA for AUG recognition. The eIF-3 complex is also required for disassembly and recycling of post-termination ribosomal complexes and subsequently prevents premature joining of the 40S and 60S ribosomal subunits prior to initiation. The eIF-3 complex specifically targets and initiates translation of a subset of mRNAs involved in cell proliferation, including cell cycling, differentiation and apoptosis, and uses different modes of RNA stem-loop binding to exert either translational activation or repression. Its function is as follows. Deubiquitinates activated NOTCH1, promoting its nuclear import, thereby acting as a positive regulator of Notch signaling. The polypeptide is Eukaryotic translation initiation factor 3 subunit F (Eif3f) (Mus musculus (Mouse)).